Here is a 430-residue protein sequence, read N- to C-terminus: Elongation factor Tu (430 aa).

Positions 13-220 constitute a tr-type G domain; it reads RPHLNIGTIG…ACDKYIALPE (208 aa). The G1 stretch occupies residues 22–29; that stretch reads GHVDHGKT. 22–29 provides a ligand contact to GTP; that stretch reads GHVDHGKT. Thr-29 contributes to the Mg(2+) binding site. Residues 66–70 form a G2 region; that stretch reads GITIS. The interval 87-90 is G3; that stretch reads DCPG. GTP is bound by residues 87–91 and 142–145; these read DCPGH and NKCD. Positions 142–145 are G4; it reads NKCD. Residues 188-190 are G5; the sequence is SAL.

Belongs to the TRAFAC class translation factor GTPase superfamily. Classic translation factor GTPase family. EF-Tu/EF-1A subfamily. In terms of assembly, monomer.

The protein resides in the cytoplasm. It catalyses the reaction GTP + H2O = GDP + phosphate + H(+). Functionally, GTP hydrolase that promotes the GTP-dependent binding of aminoacyl-tRNA to the A-site of ribosomes during protein biosynthesis. The sequence is that of Elongation factor Tu from Neorickettsia sennetsu (strain ATCC VR-367 / Miyayama) (Ehrlichia sennetsu).